A 328-amino-acid polypeptide reads, in one-letter code: tRNA uridine(34) hydroxylase (328 aa).

A Rhodanese domain is found at 130–224; that stretch reads LDEDTVVLDT…YGKDPEVQGE (95 aa). Cys-184 acts as the Cysteine persulfide intermediate in catalysis.

Belongs to the TrhO family.

The enzyme catalyses uridine(34) in tRNA + AH2 + O2 = 5-hydroxyuridine(34) in tRNA + A + H2O. Catalyzes oxygen-dependent 5-hydroxyuridine (ho5U) modification at position 34 in tRNAs. This Streptococcus agalactiae serotype Ia (strain ATCC 27591 / A909 / CDC SS700) protein is tRNA uridine(34) hydroxylase.